A 419-amino-acid polypeptide reads, in one-letter code: 4-hydroxyphenylpyruvate dioxygenase (419 aa).

VOC domains follow at residues 37 to 185 (GYDH…LLSR) and 216 to 376 (RIDH…LFTR). H219, H302, and E387 together coordinate Fe cation.

The protein belongs to the 4HPPD family. It depends on Fe cation as a cofactor.

It carries out the reaction 3-(4-hydroxyphenyl)pyruvate + O2 = homogentisate + CO2. The protein operates within amino-acid degradation; L-phenylalanine degradation; acetoacetate and fumarate from L-phenylalanine: step 3/6. In Pyricularia oryzae (strain 70-15 / ATCC MYA-4617 / FGSC 8958) (Rice blast fungus), this protein is 4-hydroxyphenylpyruvate dioxygenase (HPD4).